The sequence spans 111 residues: Protein BEX3 (111 aa).

The segment at 1-63 is disordered; it reads MANIHQENEE…RQINDGMGGD (63 aa). Positions 68–93 are interaction with p75NTR/NGFR; sequence EIFMEEMREIRRKLRELQLRNCLRIL. The interaction with 14-3-3 epsilon stretch occupies residues 68–111; it reads EIFMEEMREIRRKLRELQLRNCLRILMGELSNHHDHHDEFCLMP. The short motif at 77–87 is the Nuclear export signal element; it reads IRRKLRELQLR. The his cluster stretch occupies residues 100 to 104; sequence HHDHH. Cysteine 108 lines the Zn(2+) pocket.

This sequence belongs to the BEX family. As to quaternary structure, self-associates. Binds to the DEATH domain of p75NTR/NGFR. Interacts with 14-3-3 epsilon (YWHAE). Interacts with DIABLO/SMAC. In terms of processing, ubiquitinated. Degraded by the proteasome. Found in ovarian granulosa cells, testis, prostate and seminal vesicle tissue. High levels also detected in liver.

It is found in the nucleus. It localises to the cytoplasm. The protein localises to the cytosol. Functionally, may be a signaling adapter molecule involved in NGFR/p75NTR-mediated apoptosis induced by NGF. Plays a role in zinc-triggered neuronal death. In absence of reductive stress, acts as a pseudosubstrate for the CRL2(FEM1B) complex: associates with FEM1B via zinc, thereby preventing association between FEM1B and its substrates. The protein is Protein BEX3 of Homo sapiens (Human).